A 417-amino-acid polypeptide reads, in one-letter code: Tyrosine--tRNA ligase (417 aa).

Tyrosine 39 contributes to the L-tyrosine binding site. The 'HIGH' region signature appears at 44-53; sequence PTASSLHVGH. Positions 176 and 180 each coordinate L-tyrosine. Residues 236–240 carry the 'KMSKS' region motif; the sequence is KMGKS. An ATP-binding site is contributed by lysine 239. Positions 350-416 constitute an S4 RNA-binding domain; that stretch reads VGVLSLIVRA…GKKKHVLVRP (67 aa).

The protein belongs to the class-I aminoacyl-tRNA synthetase family. TyrS type 1 subfamily. In terms of assembly, homodimer.

The protein resides in the cytoplasm. The catalysed reaction is tRNA(Tyr) + L-tyrosine + ATP = L-tyrosyl-tRNA(Tyr) + AMP + diphosphate + H(+). In terms of biological role, catalyzes the attachment of tyrosine to tRNA(Tyr) in a two-step reaction: tyrosine is first activated by ATP to form Tyr-AMP and then transferred to the acceptor end of tRNA(Tyr). This is Tyrosine--tRNA ligase from Agrobacterium fabrum (strain C58 / ATCC 33970) (Agrobacterium tumefaciens (strain C58)).